The primary structure comprises 202 residues: Cytochrome c oxidase assembly protein CtaG (202 aa).

Over 1-13 (MSDKAAAPKKQGR) the chain is Cytoplasmic. The helical; Signal-anchor for type II membrane protein transmembrane segment at 14–36 (NNGAVVLMCLSFVFGMGAMSYAA) threads the bilayer. Over 37–202 (VPLYRIFCQV…GGAEKVEKKL (166 aa)) the chain is Periplasmic. Positions 183–202 (EGPKPLASNEGGAEKVEKKL) are disordered.

It belongs to the COX11/CtaG family.

The protein resides in the cell inner membrane. Exerts its effect at some terminal stage of cytochrome c oxidase synthesis, probably by being involved in the insertion of the copper B into subunit I. This is Cytochrome c oxidase assembly protein CtaG from Rhizobium etli (strain CIAT 652).